Reading from the N-terminus, the 300-residue chain is tRNA pseudouridine synthase B (300 aa).

D38 acts as the Nucleophile in catalysis.

Belongs to the pseudouridine synthase TruB family. Type 1 subfamily.

The catalysed reaction is uridine(55) in tRNA = pseudouridine(55) in tRNA. Responsible for synthesis of pseudouridine from uracil-55 in the psi GC loop of transfer RNAs. This is tRNA pseudouridine synthase B from Dehalococcoides mccartyi (strain ATCC BAA-2266 / KCTC 15142 / 195) (Dehalococcoides ethenogenes (strain 195)).